Consider the following 398-residue polypeptide: MMDERKLSNFQIDGEKAYTGSSQGNSYLEDRQKRQNTFTKRKAGIFKKANELALLTGSEVMVLVVSETGLVHTFSTPKLENVVKSPEGQKLITESLINATTDQNESQASQAKQSSAQLSDSESGYPLDHEEMRISEENGPSHIENLNFFSDIDNFSKTSAEEIASKLFSSVSPTHETLQFDHGLQNLEGFQANEHPEMFADHSIDFYNSNNVDIPALSMLTSQTSSSSTLNLPPEPASREVKIFPKQGKRIFSPSTGIDYETTGQHSVNSPPSTYKHRRSLNKSFATRSEPQTPRKNKIRDSLQSSPLNFPPRDRPPLIPISRIAVPSTIETEERQYRGNQKIINFYAKIFEPNSGLGTSSEGASSSFPDVDPNLAQNGVPYYSLPDIDHNQFDHLRR.

3 disordered regions span residues 1–30 (MMDE…YLED), 101–125 (TDQN…ESGY), and 254–317 (PSTG…DRPP). The MADS-box domain maps to 20-74 (GSSQGNSYLEDRQKRQNTFTKRKAGIFKKANELALLTGSEVMVLVVSETGLVHTF). Residues 106–121 (SQASQAKQSSAQLSDS) are compositionally biased toward low complexity. Polar residues-rich tracts occupy residues 262 to 273 (TTGQHSVNSPPS) and 282 to 294 (NKSF…PQTP).

It is found in the nucleus. Functionally, in response to mating-pheromone signaling or nitrogen starvation, it interacts with mat1-Pc. This activates the expression of one of two mating-type-specific genes sxa2 or map3, which leads to inactivation of the P-factor. May also interact with mat1-Mc. The polypeptide is Pheromone receptor transcription activator (map1) (Schizosaccharomyces pombe (strain 972 / ATCC 24843) (Fission yeast)).